The following is a 163-amino-acid chain: MAIEPKVIEAFIEIPTGSQNKYEYDKERGVFKLDRVLFSPMFYPAEYGYIENTLALDGDPLDVLVIVSNPTFPGCVIDAKVLGFLNMIDGGEEDQKLIAVPTEDPRFKDVNSLNDLPKHKLDEIAHFFKTYKDLEGKKTEVGAYEDAEAAAKLIDECFARYKG.

Residues lysine 21, arginine 35, and tyrosine 47 each coordinate substrate. Aspartate 57, aspartate 62, and aspartate 94 together coordinate Mg(2+). Residue tyrosine 131 coordinates substrate.

Belongs to the PPase family. As to quaternary structure, homohexamer. Requires Mg(2+) as cofactor.

The protein resides in the cytoplasm. It catalyses the reaction diphosphate + H2O = 2 phosphate + H(+). Functionally, catalyzes the hydrolysis of inorganic pyrophosphate (PPi) forming two phosphate ions. In Halalkalibacterium halodurans (strain ATCC BAA-125 / DSM 18197 / FERM 7344 / JCM 9153 / C-125) (Bacillus halodurans), this protein is Inorganic pyrophosphatase.